Consider the following 169-residue polypeptide: ATP synthase subunit b (169 aa).

The helical transmembrane segment at 3 to 23 threads the bilayer; it reads IKILLLVLPFFAFASEHGGVN.

It belongs to the ATPase B chain family. As to quaternary structure, F-type ATPases have 2 components, F(1) - the catalytic core - and F(0) - the membrane proton channel. F(1) has five subunits: alpha(3), beta(3), gamma(1), delta(1), epsilon(1). F(0) has three main subunits: a(1), b(2) and c(10-14). The alpha and beta chains form an alternating ring which encloses part of the gamma chain. F(1) is attached to F(0) by a central stalk formed by the gamma and epsilon chains, while a peripheral stalk is formed by the delta and b chains.

It localises to the cell inner membrane. Its function is as follows. F(1)F(0) ATP synthase produces ATP from ADP in the presence of a proton or sodium gradient. F-type ATPases consist of two structural domains, F(1) containing the extramembraneous catalytic core and F(0) containing the membrane proton channel, linked together by a central stalk and a peripheral stalk. During catalysis, ATP synthesis in the catalytic domain of F(1) is coupled via a rotary mechanism of the central stalk subunits to proton translocation. In terms of biological role, component of the F(0) channel, it forms part of the peripheral stalk, linking F(1) to F(0). This Campylobacter curvus (strain 525.92) protein is ATP synthase subunit b.